We begin with the raw amino-acid sequence, 115 residues long: Ribonuclease P protein component (115 aa).

It belongs to the RnpA family. Consists of a catalytic RNA component (M1 or rnpB) and a protein subunit.

It catalyses the reaction Endonucleolytic cleavage of RNA, removing 5'-extranucleotides from tRNA precursor.. In terms of biological role, RNaseP catalyzes the removal of the 5'-leader sequence from pre-tRNA to produce the mature 5'-terminus. It can also cleave other RNA substrates such as 4.5S RNA. The protein component plays an auxiliary but essential role in vivo by binding to the 5'-leader sequence and broadening the substrate specificity of the ribozyme. This Symbiobacterium thermophilum (strain DSM 24528 / JCM 14929 / IAM 14863 / T) protein is Ribonuclease P protein component.